The sequence spans 358 residues: Thiol protease aleurain-like (358 aa).

A signal peptide spans 1 to 21 (MSVKLNLSSSILLILFAAAAS). A propeptide spans 22 to 140 (KEIGFDESNP…KGSHKITEAT (119 aa)) (activation peptide). A glycan (N-linked (GlcNAc...) asparagine) is linked at Asn125. 2 cysteine pairs are disulfide-bonded: Cys162–Cys205 and Cys196–Cys238. Cys165 is an active-site residue. N-linked (GlcNAc...) asparagine glycosylation is present at Asn254. A disulfide bridge links Cys296 with Cys346. Residues His305 and Asn325 contribute to the active site.

Belongs to the peptidase C1 family.

It is found in the vacuole. The enzyme catalyses Hydrolysis of proteins, acting as an aminopeptidase (notably, cleaving Arg-|-Xaa bonds) as well as an endopeptidase.. May play a role in proteolysis leading to mobilization of nitrogen during senescence and starvation. In Arabidopsis thaliana (Mouse-ear cress), this protein is Thiol protease aleurain-like.